The primary structure comprises 569 residues: Endonuclease/exonuclease/phosphatase family domain-containing protein 1 (569 aa).

Residues methionine 1 to histidine 20 are disordered. Residue glycine 2 is the site of N-myristoyl glycine attachment. Positions isoleucine 11–histidine 20 are enriched in basic and acidic residues. A phosphoserine mark is found at serine 16, serine 21, and serine 25. Positions glutamate 38–tyrosine 67 constitute a HhH domain. Phosphoserine occurs at positions 106, 110, 160, and 173. Residues serine 200–serine 225 form a disordered region. Residues proline 202–leucine 211 show a composition bias toward polar residues. The residue at position 265 (threonine 265) is a Phosphothreonine. Position 428 is a phosphoserine (serine 428). The disordered stretch occupies residues serine 545–arginine 569. Positions glutamate 559–arginine 569 are enriched in basic and acidic residues.

This is Endonuclease/exonuclease/phosphatase family domain-containing protein 1 (EEPD1) from Homo sapiens (Human).